We begin with the raw amino-acid sequence, 137 residues long: MEKTLSIIKPDAVKKGVIGKILDRFESNGLRIAAMKKVQLSKEQAENFYAVHKERPFFKDLVEFMISGPVVVSILEGEGAVLKNRDLMGATNPKEAKAGTIRADFAESIDANAVHGSDSLENAKIEIEFFFKPNEIC.

Residues K9, F57, R85, T91, R102, and N112 each coordinate ATP. H115 (pros-phosphohistidine intermediate) is an active-site residue.

This sequence belongs to the NDK family. Homotetramer. Mg(2+) is required as a cofactor.

Its subcellular location is the cytoplasm. The enzyme catalyses a 2'-deoxyribonucleoside 5'-diphosphate + ATP = a 2'-deoxyribonucleoside 5'-triphosphate + ADP. It carries out the reaction a ribonucleoside 5'-diphosphate + ATP = a ribonucleoside 5'-triphosphate + ADP. Its function is as follows. Major role in the synthesis of nucleoside triphosphates other than ATP. The ATP gamma phosphate is transferred to the NDP beta phosphate via a ping-pong mechanism, using a phosphorylated active-site intermediate. The polypeptide is Nucleoside diphosphate kinase (Campylobacter jejuni subsp. jejuni serotype O:2 (strain ATCC 700819 / NCTC 11168)).